Reading from the N-terminus, the 170-residue chain is Aspartate 1-decarboxylase (170 aa).

Serine 25 functions as the Schiff-base intermediate with substrate; via pyruvic acid in the catalytic mechanism. Pyruvic acid (Ser) is present on serine 25. Threonine 57 contributes to the substrate binding site. Tyrosine 58 functions as the Proton donor in the catalytic mechanism. 73 to 75 lines the substrate pocket; it reads GAA. Residues 118 to 170 form a disordered region; it reads GHDPAEALPDDPSSLRGDLAVPGNPVTAAARRGTPTHQAPVALPASRTVVAPR.

It belongs to the PanD family. Heterooctamer of four alpha and four beta subunits. Pyruvate is required as a cofactor. Is synthesized initially as an inactive proenzyme, which is activated by self-cleavage at a specific serine bond to produce a beta-subunit with a hydroxyl group at its C-terminus and an alpha-subunit with a pyruvoyl group at its N-terminus.

Its subcellular location is the cytoplasm. It catalyses the reaction L-aspartate + H(+) = beta-alanine + CO2. It participates in cofactor biosynthesis; (R)-pantothenate biosynthesis; beta-alanine from L-aspartate: step 1/1. Catalyzes the pyruvoyl-dependent decarboxylation of aspartate to produce beta-alanine. In Frankia alni (strain DSM 45986 / CECT 9034 / ACN14a), this protein is Aspartate 1-decarboxylase.